A 1457-amino-acid chain; its full sequence is ABC transporter G family member 36 (1457 aa).

The tract at residues 14–43 (RLGGSMRGDSGSMWRRGDDVFSRSSREEDD) is disordered. The segment covering 28 to 39 (RRGDDVFSRSSR) has biased composition (basic and acidic residues). An ABC transporter 1 domain is found at 164-437 (GNALGILPNR…FESMGFKCPD (274 aa)). 197–204 (GPPGSGKT) is a binding site for ATP. One can recognise an ABC transmembrane type-2 1 domain in the interval 515–728 (ELLKANIDRE…AQNAISVNEL (214 aa)). 7 consecutive transmembrane segments (helical) span residues 533 to 553 (FVYMFRTFQLMVVSLIAMTLF), 565 to 585 (SGGIYMGALFFGVLMIMFNGF), 621 to 641 (IPITFIEVGGYVFLTYYVIGF), 653 to 673 (LLMLAINQMAGSLFRFIGGAA), 677 to 697 (IVANVFASFMLLIFMVLGGFI), 706 to 726 (WWIWGYWISPMMYAQNAISVN), and 765 to 785 (IGFGAMIGFTILFNALFTLAL). A disordered region spans residues 821–841 (SSGSTRRPMGNGTENDSTIVD). The region spanning 860–1112 (LSFDNVRYSV…ELIKYFESIP (253 aa)) is the ABC transporter 2 domain. Position 905–912 (905–912 (GVSGAGKT)) interacts with ATP. One can recognise an ABC transmembrane type-2 2 domain in the interval 1185–1399 (TQCMACLWKQ…TLYGLVVSQF (215 aa)). 7 consecutive transmembrane segments (helical) span residues 1209-1229 (FFFTTVIALLFGTIFWDLGGK), 1244-1264 (YAAVLFIGVMNCTSVQPVVAV), 1292-1312 (IPYTLVQATVYGIIVYAMIGF), 1319-1339 (FFWYLFFMVFTLLYFTFYGMM), 1349-1369 (IASIVSSAFYAIWNLFSGFVI), 1380-1400 (WYCWACPVAWTLYGLVVSQFG), and 1429-1449 (WVATVVAAFAFLFASLFGFAI).

Belongs to the ABC transporter superfamily. ABCG family. PDR (TC 3.A.1.205) subfamily.

Its subcellular location is the membrane. Functionally, may be a general defense protein. This Oryza sativa subsp. japonica (Rice) protein is ABC transporter G family member 36.